The following is a 380-amino-acid chain: L-lactate dehydrogenase (380 aa).

In terms of domain architecture, FMN hydroxy acid dehydrogenase spans 1–380 (MIISSASDYR…DASILVKAVA (380 aa)). Y24 contributes to the substrate binding site. Positions 106 and 127 each coordinate FMN. Y129 provides a ligand contact to substrate. T155 is an FMN binding site. Residue R164 coordinates substrate. K251 contacts FMN. The Proton acceptor role is filled by H275. R278 is a substrate binding site. FMN is bound at residue 306-330 (DSGIRSGLDVVRMLALGAKGVLLGR).

This sequence belongs to the FMN-dependent alpha-hydroxy acid dehydrogenase family. In terms of assembly, homotetramer. It depends on FMN as a cofactor.

It localises to the cell inner membrane. The enzyme catalyses (S)-lactate + A = pyruvate + AH2. In terms of biological role, catalyzes the conversion of L-lactate to pyruvate. Is coupled to the respiratory chain. The polypeptide is L-lactate dehydrogenase (Pseudomonas syringae pv. syringae (strain B728a)).